We begin with the raw amino-acid sequence, 346 residues long: Biotin synthase (346 aa).

The Radical SAM core domain occupies 38–256 (QQVQVSTLLS…IAVARIMMPT (219 aa)). Cysteine 53, cysteine 57, and cysteine 60 together coordinate [4Fe-4S] cluster. The [2Fe-2S] cluster site is built by cysteine 97, cysteine 128, cysteine 188, and arginine 260.

The protein belongs to the radical SAM superfamily. Biotin synthase family. As to quaternary structure, homodimer. The cofactor is [4Fe-4S] cluster. Requires [2Fe-2S] cluster as cofactor.

It catalyses the reaction (4R,5S)-dethiobiotin + (sulfur carrier)-SH + 2 reduced [2Fe-2S]-[ferredoxin] + 2 S-adenosyl-L-methionine = (sulfur carrier)-H + biotin + 2 5'-deoxyadenosine + 2 L-methionine + 2 oxidized [2Fe-2S]-[ferredoxin]. The protein operates within cofactor biosynthesis; biotin biosynthesis; biotin from 7,8-diaminononanoate: step 2/2. Catalyzes the conversion of dethiobiotin (DTB) to biotin by the insertion of a sulfur atom into dethiobiotin via a radical-based mechanism. The protein is Biotin synthase of Salmonella gallinarum (strain 287/91 / NCTC 13346).